The chain runs to 268 residues: Tryptophan synthase alpha chain (268 aa).

Catalysis depends on proton acceptor residues Glu49 and Asp60.

The protein belongs to the TrpA family. As to quaternary structure, tetramer of two alpha and two beta chains.

It catalyses the reaction (1S,2R)-1-C-(indol-3-yl)glycerol 3-phosphate + L-serine = D-glyceraldehyde 3-phosphate + L-tryptophan + H2O. It participates in amino-acid biosynthesis; L-tryptophan biosynthesis; L-tryptophan from chorismate: step 5/5. The alpha subunit is responsible for the aldol cleavage of indoleglycerol phosphate to indole and glyceraldehyde 3-phosphate. The chain is Tryptophan synthase alpha chain from Escherichia coli O1:K1 / APEC.